The sequence spans 143 residues: uncharacterized protein (143 aa).

Positions 1-32 (MITNLRRRTAMAAAGLGAALGLGILLVPTVDA) are cleaved as a signal peptide.

It to M.tuberculosis Rv1269c.

This is an uncharacterized protein from Mycobacterium tuberculosis (strain CDC 1551 / Oshkosh).